Consider the following 3916-residue polypeptide: Fusarin C synthetase (3916 aa).

The Ketosynthase family 3 (KS3) domain occupies 9–440 (KEPIAIIGTS…GTNVHAIIEQ (432 aa)). Residues Cys182, His319, and His360 each act as for beta-ketoacyl synthase activity in the active site. A malonyl-CoA:ACP transacylase (MAT) domain region spans residues 548-869 (VFTGQGAQWP…VTRNIHDVEA (322 aa)). The tract at residues 935–1068 (HPLLGARSVE…GQLRVEFSSL (134 aa)) is N-terminal hotdog fold. The dehydratase (DH) domain stretch occupies residues 935-1228 (HPLLGARSVE…GLTCTSLLRP (294 aa)). In terms of domain architecture, PKS/mFAS DH spans 935–1231 (HPLLGARSVE…CTSLLRPGPS (297 aa)). The active-site Proton acceptor; for dehydratase activity is His967. The tract at residues 1084–1231 (LTSVDMERFY…CTSLLRPGPS (148 aa)) is C-terminal hotdog fold. The active-site Proton donor; for dehydratase activity is the Asp1141. Residues 1350 to 1584 (VGENLPAVVR…YMTSVMLSQA (235 aa)) are C-methyltransferase (CMeT) domain. The segment at 2092 to 2266 (TYLLIGFTGG…AASVMHIGMV (175 aa)) is ketoreductase (KR) domain 1. Residues 2372-2449 (EILAVVEEEF…ELCSTVVSHL (78 aa)) form the Carrier 1 domain. An O-(pantetheine 4'-phosphoryl)serine modification is found at Ser2409. The segment at 2482 to 2511 (ASPTENEPFTIRNSPNSTQVTSESGVDEET) is disordered. The span at 2486-2505 (ENEPFTIRNSPNSTQVTSES) shows a compositional bias: polar residues. Positions 2522–2806 (PLSFAQERLW…VNLLPLRLKL (285 aa)) are condensation. Residues 2973–3385 (FEKCVVNQPD…RIAGDSQIKL (413 aa)) form an adenylation region. Positions 3493 to 3570 (KPLTETQERL…EMAAKIDGFT (78 aa)) constitute a Carrier 2 domain. Ser3530 carries the post-translational modification O-(pantetheine 4'-phosphoryl)serine. Residues 3612–3833 (LTGATGFLGV…DFVPVDVVAA (222 aa)) are thiolester reductase (R) domain.

It in the C-terminal section; belongs to the NRP synthetase family.

The protein operates within mycotoxin biosynthesis. Functionally, fusarin C synthetase; part of the gene cluster that mediates the biosynthesis of the mycotoxin fusarin C. Within the cluster, FUS1, FUS2, FUS8 and FUS9 are sufficient for fusarin production. The roles of the other FUS members are yet undetermined. The fusarin C synthetase FUS1 is responsible for the condensation of one acetyl-coenzyme A (CoA) unit with six malonyl-CoA units and the amide linkage of the arising heptaketide and homoserine, subsequently releasing the first intermediate, prefusarin, as an alcohol with an open ring structure. The cytochrome P450 monooxygenase FUS8 participates in multiple oxidation processes at carbon C-20 and is able to use the FUS1 product as substrate, resulting in formation of 20-hydroxy-prefusarin. This reaction seems to be essential before the 2-pyrrolidone ring closure can be catalyzed by FUS2, generating 20-hydroxy-fusarin. FUS8 is able to further oxidizes carbon C-20 after ring closure, resulting in the formation of carboxy-fusarin C. As the last step, FUS9 methylates the hydroxyl group at C-21 to generate fusarin C. Fusarin C can then rearrange to epi-fusarin C, the (z)-isomers, and fusarin A and fusarin D. The polypeptide is Fusarin C synthetase (Gibberella moniliformis (strain M3125 / FGSC 7600) (Maize ear and stalk rot fungus)).